The chain runs to 495 residues: Glutamate--tRNA ligase (495 aa).

The 'HIGH' region motif lies at 12–22; it reads PSPTGHLHIGN. A 'KMSKS' region motif is present at residues 259–263; that stretch reads KLSKR. Position 262 (lysine 262) interacts with ATP.

This sequence belongs to the class-I aminoacyl-tRNA synthetase family. Glutamate--tRNA ligase type 1 subfamily. In terms of assembly, monomer.

Its subcellular location is the cytoplasm. It carries out the reaction tRNA(Glu) + L-glutamate + ATP = L-glutamyl-tRNA(Glu) + AMP + diphosphate. Its function is as follows. Catalyzes the attachment of glutamate to tRNA(Glu) in a two-step reaction: glutamate is first activated by ATP to form Glu-AMP and then transferred to the acceptor end of tRNA(Glu). This Latilactobacillus sakei subsp. sakei (strain 23K) (Lactobacillus sakei subsp. sakei) protein is Glutamate--tRNA ligase.